The chain runs to 243 residues: 7-carboxy-7-deazaguanine synthase (243 aa).

Substrate is bound by residues I9 to G11 and R24. Residues Y15–L243 enclose the Radical SAM core domain. Residues C28, C32, and C35 each contribute to the [4Fe-4S] cluster site. T84 contributes to the substrate binding site. G86 is a binding site for S-adenosyl-L-methionine.

Belongs to the radical SAM superfamily. 7-carboxy-7-deazaguanine synthase family. Homodimer. [4Fe-4S] cluster is required as a cofactor. It depends on S-adenosyl-L-methionine as a cofactor. The cofactor is Mg(2+).

The enzyme catalyses 6-carboxy-5,6,7,8-tetrahydropterin + H(+) = 7-carboxy-7-deazaguanine + NH4(+). Its pathway is purine metabolism; 7-cyano-7-deazaguanine biosynthesis. Its function is as follows. Catalyzes the complex heterocyclic radical-mediated conversion of 6-carboxy-5,6,7,8-tetrahydropterin (CPH4) to 7-carboxy-7-deazaguanine (CDG), a step common to the biosynthetic pathways of all 7-deazapurine-containing compounds. This Methanocaldococcus jannaschii (strain ATCC 43067 / DSM 2661 / JAL-1 / JCM 10045 / NBRC 100440) (Methanococcus jannaschii) protein is 7-carboxy-7-deazaguanine synthase.